The sequence spans 382 residues: Dual-specificity RNA methyltransferase RlmN (382 aa).

Residue Glu-91 is the Proton acceptor of the active site. Residues 97 to 339 (EEDRGTLCIS…TTIRKTRGDD (243 aa)) enclose the Radical SAM core domain. The cysteines at positions 104 and 344 are disulfide-linked. 3 residues coordinate [4Fe-4S] cluster: Cys-111, Cys-115, and Cys-118. Residues 165-166 (GE), Ser-197, 219-221 (SLH), and Asn-301 contribute to the S-adenosyl-L-methionine site. Cys-344 serves as the catalytic S-methylcysteine intermediate.

This sequence belongs to the radical SAM superfamily. RlmN family. It depends on [4Fe-4S] cluster as a cofactor.

It localises to the cytoplasm. It catalyses the reaction adenosine(2503) in 23S rRNA + 2 reduced [2Fe-2S]-[ferredoxin] + 2 S-adenosyl-L-methionine = 2-methyladenosine(2503) in 23S rRNA + 5'-deoxyadenosine + L-methionine + 2 oxidized [2Fe-2S]-[ferredoxin] + S-adenosyl-L-homocysteine. The enzyme catalyses adenosine(37) in tRNA + 2 reduced [2Fe-2S]-[ferredoxin] + 2 S-adenosyl-L-methionine = 2-methyladenosine(37) in tRNA + 5'-deoxyadenosine + L-methionine + 2 oxidized [2Fe-2S]-[ferredoxin] + S-adenosyl-L-homocysteine. In terms of biological role, specifically methylates position 2 of adenine 2503 in 23S rRNA and position 2 of adenine 37 in tRNAs. m2A2503 modification seems to play a crucial role in the proofreading step occurring at the peptidyl transferase center and thus would serve to optimize ribosomal fidelity. The protein is Dual-specificity RNA methyltransferase RlmN of Albidiferax ferrireducens (strain ATCC BAA-621 / DSM 15236 / T118) (Rhodoferax ferrireducens).